The sequence spans 142 residues: Universal stress protein D (142 aa).

It belongs to the universal stress protein A family.

The protein localises to the cytoplasm. In terms of biological role, required for resistance to DNA-damaging agents. This chain is Universal stress protein D (uspD), found in Escherichia coli O157:H7.